The primary structure comprises 417 residues: RH-like protein (417 aa).

Transmembrane regions (helical) follow at residues 12–32, 44–64, 77–97, 125–145, 172–192, 203–223, 238–258, 265–285, 287–307, 331–351, and 358–378; these read CLPL…FFFT, LVAS…GLGF, VAFN…LDGF, ISMN…MELV, IHVF…KPLP, TSPS…WPTF, VFST…VSSL, INMT…SASC, VIHS…ISIG, TFGL…ALRV, and MIGF…AMSI.

The protein belongs to the ammonium transporter (TC 2.A.49) family. Rh subfamily.

The protein resides in the membrane. Its function is as follows. May be part of an oligomeric complex which is likely to have a transport or channel function in the erythrocyte membrane. In Macaca mulatta (Rhesus macaque), this protein is RH-like protein.